Here is a 113-residue protein sequence, read N- to C-terminus: Phosphoribosyl-ATP pyrophosphatase (113 aa).

Belongs to the PRA-PH family.

The protein resides in the cytoplasm. It catalyses the reaction 1-(5-phospho-beta-D-ribosyl)-ATP + H2O = 1-(5-phospho-beta-D-ribosyl)-5'-AMP + diphosphate + H(+). The protein operates within amino-acid biosynthesis; L-histidine biosynthesis; L-histidine from 5-phospho-alpha-D-ribose 1-diphosphate: step 2/9. The chain is Phosphoribosyl-ATP pyrophosphatase from Hydrogenovibrio crunogenus (strain DSM 25203 / XCL-2) (Thiomicrospira crunogena).